The following is a 1050-amino-acid chain: Antibiotic efflux pump membrane transporter ArpB (1050 aa).

The next 12 membrane-spanning stretches (helical) occupy residues 10-30, 339-359, 370-390, 393-413, 440-460, 472-492, 539-559, 871-891, 893-913, 923-943, 972-992, and 1004-1024; these read IFAW…ILKL, GVIH…YLFL, MTVP…GFSI, LTMF…IVVV, GALV…AFFG, ITIV…TPAL, VPFL…FARI, MPAL…ALYE, WSIP…ALIA, VYFL…AILI, IIMT…ASGA, and VIGG…LFFV.

The protein belongs to the resistance-nodulation-cell division (RND) (TC 2.A.6) family.

It localises to the cell inner membrane. In terms of biological role, the inner membrane transporter component of an antibiotic efflux pump. Confers resistance to numerous structurally unrelated antibiotics such as carbenicillin, chloramphenicol, erythromycin, novobiocin, streptomycin and tetracycline. Is not involved in organic solvent efflux. In Pseudomonas putida (Arthrobacter siderocapsulatus), this protein is Antibiotic efflux pump membrane transporter ArpB (arpB).